A 61-amino-acid chain; its full sequence is Large ribosomal subunit protein bL32 (61 aa).

Belongs to the bacterial ribosomal protein bL32 family.

This chain is Large ribosomal subunit protein bL32, found in Ehrlichia chaffeensis (strain ATCC CRL-10679 / Arkansas).